Here is a 56-residue protein sequence, read N- to C-terminus: Single-pass membrane and coiled-coil domain-containing protein 4 homolog (56 aa).

Residues 1–27 are disordered; it reads MRQLPGKAAKETRKMKRERKQQNKEGH. Residues 9–31 adopt a coiled-coil conformation; it reads AKETRKMKRERKQQNKEGHNRVV. The chain crosses the membrane as a helical span at residues 30-50; that stretch reads VVTVAIPVCLAVFVMLIVYVY.

This sequence belongs to the SMCO4 family.

It is found in the membrane. This Nematostella vectensis (Starlet sea anemone) protein is Single-pass membrane and coiled-coil domain-containing protein 4 homolog.